Reading from the N-terminus, the 165-residue chain is Inorganic pyrophosphatase (165 aa).

Substrate contacts are provided by Lys-21, Arg-35, and Tyr-47. Mg(2+)-binding residues include Asp-57, Asp-62, and Asp-94. Position 131 (Tyr-131) interacts with substrate.

The protein belongs to the PPase family. In terms of assembly, homohexamer. It depends on Mg(2+) as a cofactor.

Its subcellular location is the cytoplasm. It catalyses the reaction diphosphate + H2O = 2 phosphate + H(+). Catalyzes the hydrolysis of inorganic pyrophosphate (PPi) forming two phosphate ions. In Geobacillus stearothermophilus (Bacillus stearothermophilus), this protein is Inorganic pyrophosphatase.